The sequence spans 112 residues: MEAYEQVQKGPLKLKGVAELGVTKRKKKKKDKDKAKMLEAMGTSKKSEEEKRRCLDKRTPAQAAFEKMQEKRQMERILKKASKTHKQRVEDFNRHLDTLTEHYDIPKVSWTK.

Residues 23-56 (TKRKKKKKDKDKAKMLEAMGTSKKSEEEKRRCLD) form a disordered region. The span at 45–56 (KKSEEEKRRCLD) shows a compositional bias: basic and acidic residues.

This sequence belongs to the FAM32 family. Widely expressed, with highest level in pancreas and lowest in muscle.

The protein localises to the nucleus. In terms of biological role, may induce G2 arrest and apoptosis. May also increase cell sensitivity to apoptotic stimuli. In cell lines, may play a role in the inhibition of anchor-independent cell growth. This Mus musculus (Mouse) protein is Protein FAM32A (Fam32a).